The chain runs to 332 residues: 2,3-diketo-L-gulonate reductase (332 aa).

His44 functions as the Proton donor in the catalytic mechanism. Residues Ile168–Ser174, Trp224–Lys225, and Gly304–Glu306 contribute to the NAD(+) site.

It belongs to the LDH2/MDH2 oxidoreductase family. DlgD subfamily. In terms of assembly, homodimer.

The protein resides in the cytoplasm. The catalysed reaction is 3-dehydro-L-gulonate + NAD(+) = 2,3-dioxo-L-gulonate + NADH + H(+). The enzyme catalyses 3-dehydro-L-gulonate + NADP(+) = 2,3-dioxo-L-gulonate + NADPH + H(+). Catalyzes the reduction of 2,3-diketo-L-gulonate in the presence of NADH, to form 3-keto-L-gulonate. This is 2,3-diketo-L-gulonate reductase from Salmonella typhi.